Reading from the N-terminus, the 287-residue chain is Phosphatidylserine decarboxylase proenzyme (287 aa).

Catalysis depends on charge relay system; for autoendoproteolytic cleavage activity residues aspartate 90, histidine 147, and serine 252. Catalysis depends on serine 252, which acts as the Schiff-base intermediate with substrate; via pyruvic acid; for decarboxylase activity. Serine 252 bears the Pyruvic acid (Ser); by autocatalysis mark.

Belongs to the phosphatidylserine decarboxylase family. PSD-B subfamily. Prokaryotic type I sub-subfamily. Heterodimer of a large membrane-associated beta subunit and a small pyruvoyl-containing alpha subunit. It depends on pyruvate as a cofactor. Is synthesized initially as an inactive proenzyme. Formation of the active enzyme involves a self-maturation process in which the active site pyruvoyl group is generated from an internal serine residue via an autocatalytic post-translational modification. Two non-identical subunits are generated from the proenzyme in this reaction, and the pyruvate is formed at the N-terminus of the alpha chain, which is derived from the carboxyl end of the proenzyme. The autoendoproteolytic cleavage occurs by a canonical serine protease mechanism, in which the side chain hydroxyl group of the serine supplies its oxygen atom to form the C-terminus of the beta chain, while the remainder of the serine residue undergoes an oxidative deamination to produce ammonia and the pyruvoyl prosthetic group on the alpha chain. During this reaction, the Ser that is part of the protease active site of the proenzyme becomes the pyruvoyl prosthetic group, which constitutes an essential element of the active site of the mature decarboxylase.

Its subcellular location is the cell membrane. The enzyme catalyses a 1,2-diacyl-sn-glycero-3-phospho-L-serine + H(+) = a 1,2-diacyl-sn-glycero-3-phosphoethanolamine + CO2. The protein operates within phospholipid metabolism; phosphatidylethanolamine biosynthesis; phosphatidylethanolamine from CDP-diacylglycerol: step 2/2. Catalyzes the formation of phosphatidylethanolamine (PtdEtn) from phosphatidylserine (PtdSer). This Pseudomonas putida (strain W619) protein is Phosphatidylserine decarboxylase proenzyme.